Here is a 348-residue protein sequence, read N- to C-terminus: MNLQGKKITVHDMTLRDGMHPKRHMMTLEQMKSIACGLDAAGVPLIEVTHGDGLGGSSVNYGFPAHSDEEYLGAVIPLMKQAKVSALLLPGIGTVDHLKMAKELGVHTIRVATHCTEADVSEQHIALARKLEMDTVGFLMMAHMNSPEGLVGQAKLMESYGANCVYITDSAGYMLPDDVRARLGAVREALKPETELGFHGHHNLAMGIANSIAAVECGATRIDAASAGLGAGAGNTPMEVLVAVCDRMGIQTGVDVWAIQDVAEDLVVPIMDFPIRIDRDSLTLGYAGVYGSFLLFAKRAERKYGVPAREILVELGRRGMVGGQEDMIEDTAITLAKARASKAQKVAA.

The Pyruvate carboxyltransferase domain maps to 8–260; the sequence is ITVHDMTLRD…QTGVDVWAIQ (253 aa). 16-17 is a binding site for substrate; the sequence is RD. Residue aspartate 17 coordinates Mn(2+). Histidine 20 functions as the Proton acceptor in the catalytic mechanism. Substrate-binding residues include serine 170 and histidine 199. The Mn(2+) site is built by histidine 199 and histidine 201. Tyrosine 290 contributes to the substrate binding site.

This sequence belongs to the 4-hydroxy-2-oxovalerate aldolase family.

It catalyses the reaction (S)-4-hydroxy-2-oxopentanoate = acetaldehyde + pyruvate. The chain is 4-hydroxy-2-oxovalerate aldolase 1 from Cupriavidus metallidurans (strain ATCC 43123 / DSM 2839 / NBRC 102507 / CH34) (Ralstonia metallidurans).